Reading from the N-terminus, the 608-residue chain is MLNGQIAHSYLENSCTLIIPRPPVLNQSSKSAQPAAAAAASSSAGEEFGQEAGSGLAEAEALHVDRIRNCDIFVDAHDLYFYADVKLYKFHSRRTFDLRELKTLLIKFNTTENHYQICLRCLPLTAGAQEGPGGERGGGGGTGDAAKQWNSRKEYIAAFLHLPTLSANLPDKQPLVQEWKLKRITDQCQLQLDDHERTYKLTNNFGYGYASEYSGPLDLSELDRATCRVSEPHRMSPIQRRQERVVDEMKRFSREQYKINFVELQVPSGHQNPLRYKPKIYETSMTQEQAHLLHNISRMQTREQQPCDVFRQNEIDCGLISILLAICYDVRTTNNEPTCESGWTRSILCPLYCYFEQFDNYRDVLVAFLRRMITYPLYRNFELGRQCVRDAIEVLKGGRNWLINQLLLTHQQFASSDPSRDSFNNYYLEDYIRYVTSPSACSDEHMRLLARNLKNVLMDVNKQHLGLGVTEIETELIKELMQEMRIDAGSQGSSPQQQHGDDDLDLDNDTSGQEDETTTDDESVITDSFYSVDMDMRLIENEIVYEDDEEDEDDDEDGDDDEDGDGDEDEDEDEDEDDSSSSTTTSSEAEGNSVIEQCSNSETAASTT.

Disordered stretches follow at residues 487–531 and 543–608; these read DAGS…SFYS and IVYE…ASTT. A compositionally biased stretch (low complexity) spans 489-498; it reads GSQGSSPQQQ. Acidic residues-rich tracts occupy residues 502–524 and 543–579; these read DDLDLDNDTSGQEDETTTDDESV and IVYEDDEEDEDDDEDGDDDEDGDGDEDEDEDEDEDDS. Over residues 588–608 the composition is skewed to polar residues; sequence EAEGNSVIEQCSNSETAASTT.

This sequence belongs to the SHQ1 family.

Required for the quantitative accumulation of H/ACA ribonucleoproteins (RNPs). This Drosophila melanogaster (Fruit fly) protein is Protein SHQ1 homolog.